A 313-amino-acid chain; its full sequence is Protein FixB (313 aa).

255–283 (LYLAVGISGQIQHMVGANASQTIFAINKD) provides a ligand contact to FAD.

It belongs to the ETF alpha-subunit/FixB family. Heterodimer of FixA and FixB.

It functions in the pathway amine and polyamine metabolism; carnitine metabolism. In terms of biological role, required for anaerobic carnitine reduction. May bring reductant to CaiA. This chain is Protein FixB, found in Escherichia coli (strain 55989 / EAEC).